A 176-amino-acid polypeptide reads, in one-letter code: Large ribosomal subunit protein bL28m (176 aa).

Residues 1-8 constitute a mitochondrion transit peptide; that stretch reads MASKLLRK.

Belongs to the bacterial ribosomal protein bL28 family. In terms of assembly, component of the mitochondrial large ribosomal subunit (mt-LSU). Mature yeast 74S mitochondrial ribosomes consist of a small (37S) and a large (54S) subunit. The 37S small subunit contains a 15S ribosomal RNA (15S mt-rRNA) and at least 32 different proteins. The 54S large subunit contains a 21S rRNA (21S mt-rRNA) and at least 45 different proteins.

It localises to the cytoplasm. Its subcellular location is the mitochondrion. In terms of biological role, component of the mitochondrial ribosome (mitoribosome), a dedicated translation machinery responsible for the synthesis of mitochondrial genome-encoded proteins, including at least some of the essential transmembrane subunits of the mitochondrial respiratory chain. The mitoribosomes are attached to the mitochondrial inner membrane and translation products are cotranslationally integrated into the membrane. The chain is Large ribosomal subunit protein bL28m (mrpl24) from Schizosaccharomyces pombe (strain 972 / ATCC 24843) (Fission yeast).